A 987-amino-acid polypeptide reads, in one-letter code: Ras guanine nucleotide exchange factor efc25 (987 aa).

The segment covering 1-10 (MRRPNLDRLR) has biased composition (basic and acidic residues). Disordered stretches follow at residues 1-50 (MRRP…STMS), 100-130 (FSST…PEIR), and 529-552 (NANT…ISRS). A compositionally biased stretch (low complexity) spans 19–39 (TSVSKPSTPSYSTYSLSPTFS). Composition is skewed to polar residues over residues 40 to 50 (DKSVLSPSTMS), 102 to 111 (STHSLTRQPS), and 540 to 552 (RQTN…ISRS). S552 is subject to Phosphoserine. The 134-residue stretch at 590–723 (SDNNVKGGTL…VILSEIDNLW (134 aa)) folds into the N-terminal Ras-GEF domain. Residues 752 to 985 (TPEEFASQMT…FDKSLSLEPR (234 aa)) form the Ras-GEF domain.

The protein resides in the cytoplasm. In terms of biological role, has a role in chromosome segregation and cell morphology upstream of the ras1-scd1 pathway. Promotes the exchange of ras1-bound GDP by GTP leading to its activation. This is Ras guanine nucleotide exchange factor efc25 (efc25) from Schizosaccharomyces pombe (strain 972 / ATCC 24843) (Fission yeast).